The following is a 182-amino-acid chain: Heat shock protein beta-2 (182 aa).

The region spanning 55–163 (RAGEGGRAGA…DTEVNEVYIS (109 aa)) is the sHSP domain.

The protein belongs to the small heat shock protein (HSP20) family. As to quaternary structure, interacts with DMPK; may enhance its kinase activity.

It is found in the cytoplasm. The protein resides in the nucleus. May regulate the kinase DMPK. The sequence is that of Heat shock protein beta-2 (Hspb2) from Rattus norvegicus (Rat).